The chain runs to 458 residues: UPF0210 protein MmarC5_0151 (458 aa).

This sequence belongs to the UPF0210 family.

The protein is UPF0210 protein MmarC5_0151 of Methanococcus maripaludis (strain C5 / ATCC BAA-1333).